The sequence spans 462 residues: Alkaline phosphatase 3 (462 aa).

An N-terminal signal peptide occupies residues 1-32 (MKKFPKKLLPIAVLSSIAFSSLASGSVPEASA). D52 is a binding site for Mg(2+). D52 is a Zn(2+) binding site. The active-site Phosphoserine intermediate is the S101. The Mg(2+) site is built by T154 and E275. Positions 280, 284, 322, 323, and 419 each coordinate Zn(2+).

This sequence belongs to the alkaline phosphatase family. In terms of assembly, monomer. It depends on Mg(2+) as a cofactor. Zn(2+) serves as cofactor.

The enzyme catalyses a phosphate monoester + H2O = an alcohol + phosphate. The sequence is that of Alkaline phosphatase 3 (phoB) from Bacillus subtilis (strain 168).